We begin with the raw amino-acid sequence, 352 residues long: Mitochondrial ubiquitin ligase activator of NFKB 1 (352 aa).

At 1–8 (MESGSRPS) the chain is on the cytoplasmic side. Residues 9–29 (LGQVILLGTSSMVTAVLYSIY) form a helical membrane-spanning segment. Residues 30–238 (RQKAQVAQEL…LLHRQESSVR (209 aa)) are Mitochondrial intermembrane-facing. A Glycyl lysine isopeptide (Lys-Gly) (interchain with G-Cter in ubiquitin) cross-link involves residue lysine 52. The helical transmembrane segment at 239-259 (LWKILVLVFGFATCATLFFIL) threads the bilayer. Topologically, residues 260 to 352 (RKQYLHRQER…ITRVIPLYNS (93 aa)) are cytoplasmic. Lysine 299 participates in a covalent cross-link: Glycyl lysine isopeptide (Lys-Gly) (interchain with G-Cter in ubiquitin). An RING-type zinc finger spans residues 302 to 340 (CVVCLSNFKSCVFLECGHVCSCRQCYLALPEPKRCPICR).

Homooligomer. Interacts with MAP3K7/TAK1. Interacts with UBC9. Interacts with and sumoylates DNM1L. Interacts with MAVS. Interacts with TP53 (via N-terminus); the interaction leads to ubiquitination and proteasomal degradation of TP53. Ubiquitinated by PRKN during mitophagy, leading to its degradation and enhancement of mitophagy. Deubiquitinated by USP30. Expressed in cortical neurons (at protein level).

It is found in the mitochondrion outer membrane. Its subcellular location is the peroxisome. The enzyme catalyses S-ubiquitinyl-[E2 ubiquitin-conjugating enzyme]-L-cysteine + [acceptor protein]-L-lysine = [E2 ubiquitin-conjugating enzyme]-L-cysteine + N(6)-ubiquitinyl-[acceptor protein]-L-lysine.. It participates in protein modification; protein ubiquitination. It functions in the pathway protein modification; protein sumoylation. Exhibits weak E3 ubiquitin-protein ligase activity. E3 ubiquitin ligases accept ubiquitin from an E2 ubiquitin-conjugating enzyme in the form of a thioester and then directly transfer the ubiquitin to targeted substrates. Can ubiquitinate AKT1 preferentially at 'Lys-284' involving 'Lys-48'-linked polyubiquitination and seems to be involved in regulation of Akt signaling by targeting phosphorylated Akt to proteasomal degradation. Mediates polyubiquitination of cytoplasmic TP53 at 'Lys-27' which targets TP53 for proteasomal degradation, thus reducing TP53 levels in the cytoplasm and mitochondrion. Proposed to preferentially act as a SUMO E3 ligase at physiological concentrations. Plays a role in the control of mitochondrial morphology by promoting mitochondrial fragmentation, and influences mitochondrial localization. Likely to promote mitochondrial fission through negatively regulating the mitochondrial fusion proteins MFN1 and MFN2, acting in a pathway that is parallel to the PRKN/PINK1 regulatory pathway. May also be involved in the sumoylation of the membrane fission protein DNM1L. Inhibits cell growth. When overexpressed, activates JNK through MAP3K7/TAK1 and induces caspase-dependent apoptosis. Involved in the modulation of innate immune defense against viruses by inhibiting RIGI-dependent antiviral response. Can mediate RIGI sumoylation and disrupt its polyubiquitination. The chain is Mitochondrial ubiquitin ligase activator of NFKB 1 (Mul1) from Mus musculus (Mouse).